Reading from the N-terminus, the 81-residue chain is Protein Vpu (81 aa).

Residues 1–7 are Extracellular-facing; sequence MQSLQVL. The chain crosses the membrane as a helical span at residues 8 to 28; it reads AIVALVVATIIAIVVWTIVFI. At 29 to 81 the chain is on the cytoplasmic side; that stretch reads EYRKILRQRKIDRLINRITERAEDSGNESDGDQEELSALVERGHLAPWDVDDL. A disordered region spans residues 50-81; that stretch reads AEDSGNESDGDQEELSALVERGHLAPWDVDDL. Serine 53 and serine 57 each carry phosphoserine; by host CK2. The segment covering 53 to 63 has biased composition (acidic residues); it reads SGNESDGDQEE.

This sequence belongs to the HIV-1 VPU protein family. In terms of assembly, homopentamer. Interacts with host CD4 and BRTC; these interactions induce proteasomal degradation of CD4. Interacts with host BST2; this interaction leads to the degradation of host BST2. Interacts with host FBXW11. Interacts with host AP1M1; this interaction plays a role in the mistrafficking and subsequent degradation of host BST2. Interacts with host RANBP2; this interaction allows Vpu to down-regulate host BLM sumoylation. Phosphorylated by host CK2. This phosphorylation is necessary for interaction with human BTRC and degradation of CD4.

Its subcellular location is the host membrane. Its activity is regulated as follows. Ion channel activity is inhibited by hexamethylene amiloride in vitro. Functionally, enhances virion budding by targeting host CD4 and Tetherin/BST2 to proteasome degradation. Degradation of CD4 prevents any unwanted premature interactions between viral Env and its host receptor CD4 in the endoplasmic reticulum. Degradation of antiretroviral protein Tetherin/BST2 is important for virion budding, as BST2 tethers new viral particles to the host cell membrane. Mechanistically, Vpu bridges either CD4 or BST2 to BTRC, a substrate recognition subunit of the Skp1/Cullin/F-box protein E3 ubiquitin ligase, induces their ubiquitination and subsequent proteasomal degradation. The alteration of the E3 ligase specificity by Vpu seems to promote the degradation of host IKBKB, leading to NF-kappa-B down-regulation and subsequent apoptosis. Acts as a viroporin that forms an oligomeric ion channel in membranes. Modulates the host DNA repair mechanisms to promote degradation of nuclear viral cDNA in cells that are already productively infected in order to suppress immune sensing and proviral hyper-integration (superinfection). Manipulates PML-NBs and modulates SUMOylation of host BLM protein thereby enhancing its DNA-end processing activity toward viral unintegrated linear DNA. Also inhibits RAD52-mediated homologous repair of viral cDNA, preventing the generation of dead-end circular forms of single copies of the long terminal repeat and permitting sustained nucleolytic attack. This is Protein Vpu from Human immunodeficiency virus type 1 group M subtype B (isolate YU-2) (HIV-1).